Consider the following 263-residue polypeptide: Triosephosphate isomerase (263 aa).

Position 10-12 (10-12) interacts with substrate; that stretch reads NWK. The active-site Electrophile is the His104. The active-site Proton acceptor is the Glu176. Substrate is bound by residues Gly182, Ser221, and 242–243; that span reads GG.

Belongs to the triosephosphate isomerase family. Homodimer.

It localises to the cytoplasm. It catalyses the reaction D-glyceraldehyde 3-phosphate = dihydroxyacetone phosphate. Its pathway is carbohydrate biosynthesis; gluconeogenesis. It participates in carbohydrate degradation; glycolysis; D-glyceraldehyde 3-phosphate from glycerone phosphate: step 1/1. Involved in the gluconeogenesis. Catalyzes stereospecifically the conversion of dihydroxyacetone phosphate (DHAP) to D-glyceraldehyde-3-phosphate (G3P). The sequence is that of Triosephosphate isomerase from Haemophilus influenzae (strain 86-028NP).